The following is a 107-amino-acid chain: Nucleoid-associated protein Xfasm12_1216 (107 aa).

It belongs to the YbaB/EbfC family. In terms of assembly, homodimer.

The protein localises to the cytoplasm. The protein resides in the nucleoid. Its function is as follows. Binds to DNA and alters its conformation. May be involved in regulation of gene expression, nucleoid organization and DNA protection. The sequence is that of Nucleoid-associated protein Xfasm12_1216 from Xylella fastidiosa (strain M12).